We begin with the raw amino-acid sequence, 328 residues long: Endochitinase (328 aa).

The first 26 residues, 1 to 26 (MRRHKEVNFVAYLLFSLLVLVSAALA), serve as a signal peptide directing secretion. Residues 27-68 (QNCGSQGGGKACASGQCCSKFGWCGNTNDYCGSGNCQSQCPG) enclose the Chitin-binding type-1 domain. Intrachain disulfides connect Cys-29–Cys-44, Cys-38–Cys-50, Cys-43–Cys-57, Cys-62–Cys-66, Cys-100–Cys-162, Cys-174–Cys-182, and Cys-281–Cys-313. Glu-144 (proton donor) is an active-site residue. Residues 322 to 328 (ALLVDTL) constitute a propeptide, removed in mature form.

The protein belongs to the glycosyl hydrolase 19 family. Chitinase class I subfamily.

It localises to the vacuole. It catalyses the reaction Random endo-hydrolysis of N-acetyl-beta-D-glucosaminide (1-&gt;4)-beta-linkages in chitin and chitodextrins.. In terms of biological role, defense against chitin-containing fungal pathogens. The sequence is that of Endochitinase from Solanum tuberosum (Potato).